The primary structure comprises 323 residues: Ubiquinone biosynthesis protein COQ4, mitochondrial (323 aa).

The transit peptide at 1–29 directs the protein to the mitochondrion; the sequence is MLKSTVSNTRIKCCRIDQRRNYLFTALAS. His-205, Asp-206, His-209, and Glu-221 together coordinate Zn(2+).

This sequence belongs to the COQ4 family. As to quaternary structure, component of a multi-subunit COQ enzyme complex, composed of at least COQ3, COQ4, COQ5, COQ6, COQ7 and COQ9. Zn(2+) serves as cofactor.

It is found in the mitochondrion inner membrane. It carries out the reaction a 4-hydroxy-3-methoxy-5-(all-trans-polyprenyl)benzoate + H(+) = a 2-methoxy-6-(all-trans-polyprenyl)phenol + CO2. The protein operates within cofactor biosynthesis; ubiquinone biosynthesis. Its function is as follows. Lyase that catalyzes the C1-decarboxylation of 4-hydroxy-3-methoxy-5-(all-trans-polyprenyl)benzoic acid into 2-methoxy-6-(all-trans-polyprenyl)phenol during ubiquinone biosynthesis. The protein is Ubiquinone biosynthesis protein COQ4, mitochondrial of Candida dubliniensis (strain CD36 / ATCC MYA-646 / CBS 7987 / NCPF 3949 / NRRL Y-17841) (Yeast).